Here is a 473-residue protein sequence, read N- to C-terminus: Sulfhydrylase-like protein lolC2 (473 aa).

K226 carries the N6-(pyridoxal phosphate)lysine modification.

The protein belongs to the trans-sulfuration enzymes family. Pyridoxal 5'-phosphate is required as a cofactor.

Its pathway is alkaloid biosynthesis. Functionally, sulfhydrylase-like protein; part of the gene cluster that mediates the biosynthesis of loline alkaloids, potent insecticidal agents composed of a pyrrolizidine ring system and an uncommon ether bridge linking carbons 2 and 7. Lolines are structurally differentiated by the various modifications of the L-amino group and include norloline, loline, N-methylloline, N-acetylloline, N-acetylnorloline, and N-formylloline. The first committed step is the condensation of O-acetyl-L-homoserine (derived from L-aspartic acid) and L-proline, probably catalyzed by the gamma-type pyridoxal 5'-phosphate(PLP)-dependent enzyme lolC, to give the diamino diacid, NACPP. Ensuing cyclization, decarboxylation, and acetylation steps yield 1-exo-acetamidopyrrolizidine (AcAP). LolO is required for installation of the ether bridge upon the pathway intermediate, 1-exo-acetamidopyrrolizidine (AcAP). In sequential 2-oxoglutarate- and O(2)-consuming steps, lolO removes hydrogens from C2 and C7 of AcAP to form both carbon-oxygen bonds in N-acetylnorloline (NANL), the precursor to all other lolines. The enzymes lolD, lolE, lolF and lolT have also been proposed to be involved in the ether-bridge installation. Further processing of the exocyclic moiety of NANL by fungal N-acetamidase (LolN), methyltransferase (LolM), and cytochrome P450 (LolP) enzymes, with occasional involvement of a plant acetyltransferase, generates the other known lolines. LolN transforms NANL to norlonine which is monomethylated and dimethylated to respectively lonine and N-methyllonine (NML) by lolM. LolP catalyzes hydroxylation of the methyl group in N-methylloline (NML) and further oxygenation to N-formylloline (NFL). A plant acetyltransferase is responsible for the acetylation of loline to form N-acetylloline (NAL). LolA might interact with aspartate kinase to prevent feedback inhibition of its activity by these end products and thereby promote production of L-homoserine from L-aspartate. The chain is Sulfhydrylase-like protein lolC2 from Epichloe uncinata (Endophyte fungus).